A 377-amino-acid chain; its full sequence is RING-H2 finger protein ATL22 (377 aa).

A signal peptide spans M1–A23. Residues I244–M264 form a helical membrane-spanning segment. The segment at C327–R369 adopts an RING-type; atypical zinc-finger fold.

Belongs to the RING-type zinc finger family. ATL subfamily.

The protein resides in the membrane. It catalyses the reaction S-ubiquitinyl-[E2 ubiquitin-conjugating enzyme]-L-cysteine + [acceptor protein]-L-lysine = [E2 ubiquitin-conjugating enzyme]-L-cysteine + N(6)-ubiquitinyl-[acceptor protein]-L-lysine.. The protein operates within protein modification; protein ubiquitination. The sequence is that of RING-H2 finger protein ATL22 (ATL22) from Arabidopsis thaliana (Mouse-ear cress).